The primary structure comprises 280 residues: Four and a half LIM domains protein 3 (280 aa).

N-acetylserine is present on Ser-2. The C4-type zinc finger occupies Cys-7–Cys-31. LIM zinc-binding domains are found at residues Cys-40–Cys-92 and Cys-101–Cys-153. Lys-157 carries the N6-acetyllysine modification. LIM zinc-binding domains are found at residues Cys-162 to Cys-212 and Cys-221 to Cys-275. Position 235 is an N6-acetyllysine (Lys-235).

As to quaternary structure, interacts with SOX15; the interaction recruits FHL3 to FOXK1 promoters where it acts as a transcriptional coactivator of FOXK1. As to expression, expressed only in skeletal muscle.

The protein localises to the nucleus. It localises to the cytoplasm. Functionally, recruited by SOX15 to FOXK1 promoters where it acts as a transcriptional coactivator of FOXK1. In Homo sapiens (Human), this protein is Four and a half LIM domains protein 3 (FHL3).